The chain runs to 341 residues: MHRTYSLRNQRAPTAAELQAPPPPPSSTKSKFFGKASIASSFRKNAAGNFGPELARKLSQLVKTEKGVLRAMEVVASERREAAKQLSLWGADNDDDVSDVTDKLGVLIYELGELQDQFIDKYDQYRVTLKSIRNIEASVQPSRDRKEKITDEIAHLKYKDPQSTKIPVLEQELVRAEAESLVAEAQLSNITREKLKAAYSYMFDSLRELSEKFALIAGYGKALLELLDDSPVTPGEARPAYDGYEASRQIIMDAESALESWTLDMAAVKPTLSFHQTVDDVYEDEDGEEEEEPEIQNGDIPGQVVEEEEVEWTTEVPVDDEAHEADHHVSQNGHTSGSENI.

Residues 1 to 11 show a composition bias toward polar residues; it reads MHRTYSLRNQR. The interval 1–32 is disordered; the sequence is MHRTYSLRNQRAPTAAELQAPPPPPSSTKSKF. A Phosphothreonine modification is found at Thr233. Composition is skewed to acidic residues over residues 282–294 and 305–323; these read YEDEDGEEEEEPE and VEEEEVEWTTEVPVDDEAH. The disordered stretch occupies residues 282-341; that stretch reads YEDEDGEEEEEPEIQNGDIPGQVVEEEEVEWTTEVPVDDEAHEADHHVSQNGHTSGSENI. Residues 330-341 are compositionally biased toward polar residues; sequence SQNGHTSGSENI.

Post-translationally, phosphorylated by PKH1 and PKH2. Phosphorylation is stimulated by sphingolipid long chain bases (LCBs). N-glycosylated.

It localises to the cytoplasm. The protein localises to the cell cortex. Its function is as follows. Together with PIL1, main component of eisosomes, structures at the cell periphery underneath the plasma membrane that mark the site of endocytosis. Negative regulator of cell wall integrity (CWI) in unstressed cells, probably by inhibiting protein kinase PKH1/PHK2 activity and regulating their downstream CWI pathways PKC1-MAP kinase pathway and protein kinase YPK1 pathway. Activity may be regulated by the transient increase of sphingolipid long chain bases (LCBs) during heat stress. This Saccharomyces cerevisiae (strain ATCC 204508 / S288c) (Baker's yeast) protein is Sphingolipid long chain base-responsive protein LSP1 (LSP1).